We begin with the raw amino-acid sequence, 550 residues long: CTP synthase (550 aa).

The interval 1–277 is amidoligase domain; that stretch reads MNGSADAGPR…GRAVERALGL (277 aa). Ser23 contributes to the CTP binding site. Ser23 lines the UTP pocket. 24–29 lines the ATP pocket; the sequence is SLGKGI. Tyr64 contacts L-glutamine. An ATP-binding site is contributed by Asp81. Residues Asp81 and Glu151 each contribute to the Mg(2+) site. Residues 158–160, 198–203, and Lys234 contribute to the CTP site; these read DIE and KTKPTQ. UTP is bound by residues 198–203 and Lys234; that span reads KTKPTQ. Val252 is a binding site for ATP. Residues 302–549 form the Glutamine amidotransferase type-1 domain; sequence KIAIAGKYVK…VEAALAYQER (248 aa). Residue Gly364 participates in L-glutamine binding. Cys391 functions as the Nucleophile; for glutamine hydrolysis in the catalytic mechanism. Residues 392–395, Glu415, and Arg472 each bind L-glutamine; that span reads LGLQ. Residues His522 and Glu524 contribute to the active site.

It belongs to the CTP synthase family. Homotetramer in the presence of UTP and ATP. Is in a protein concentration-dependent equilibrium between monomer, dimer, and tetramer in the absence of UTP and ATP.

The catalysed reaction is UTP + L-glutamine + ATP + H2O = CTP + L-glutamate + ADP + phosphate + 2 H(+). It carries out the reaction L-glutamine + H2O = L-glutamate + NH4(+). It catalyses the reaction UTP + NH4(+) + ATP = CTP + ADP + phosphate + 2 H(+). It functions in the pathway pyrimidine metabolism; CTP biosynthesis via de novo pathway; CTP from UDP: step 2/2. Its activity is regulated as follows. Allosterically activated by GTP, when glutamine is the substrate. GTP has no effect on the reaction when ammonia is the substrate. The allosteric effector GTP functions by stabilizing the protein conformation that binds the tetrahedral intermediate(s) formed during glutamine hydrolysis. Inhibited by the product CTP, via allosteric rather than competitive inhibition. Functionally, catalyzes the ATP-dependent amination of UTP to CTP with either L-glutamine or ammonia as the source of nitrogen. Regulates intracellular CTP levels through interactions with the four ribonucleotide triphosphates. In Thermus thermophilus (strain ATCC 27634 / DSM 579 / HB8), this protein is CTP synthase.